Reading from the N-terminus, the 408-residue chain is BRCA1-A complex subunit Abraxas 1 (408 aa).

Positions 7 to 155 (TAVMSGFVFG…KSTHRLEYAL (149 aa)) constitute an MPN domain. A coiled-coil region spans residues 210–273 (ALAEVNRISN…EETGNKVSEA (64 aa)). Polar residues predominate over residues 360–372 (LQLQKQHSQNGDS). Positions 360–408 (LQLQKQHSQNGDSEGSDSERPLCNSGTETDGDILESLHMDVSRSKSPIF) are disordered. S405 carries the phosphoserine modification. The short motif at 405–408 (SPIF) is the pSXXF motif element.

The protein belongs to the FAM175 family. Abraxas subfamily. As to quaternary structure, component of the BRCA1-A complex. Component of the BRISC complex. Interacts directly (when phosphorylated at Ser-405) with brca1. Homodimer. The phosphorylated homodimer can interact directly with two brca1 chains, giving rise to a heterotetramer. In terms of processing, phosphorylation of Ser-405 of the pSXXF motif by ATM or ATR constitutes a specific recognition motif for the BRCT domain of BRCA1.

The protein resides in the nucleus. Functionally, involved in DNA damage response and double-strand break (DSB) repair. Component of the BRCA1-A complex, acting as a central scaffold protein that assembles the various components of the complex and mediates the recruitment of brca1. The BRCA1-A complex specifically recognizes 'Lys-63'-linked ubiquitinated histones H2A and H2AX at DNA lesion sites, leading to target the brca1-bard1 heterodimer to sites of DNA damage at DSBs. This complex also possesses deubiquitinase activity that specifically removes 'Lys-63'-linked ubiquitin on histones H2A and H2AX. The chain is BRCA1-A complex subunit Abraxas 1 from Xenopus tropicalis (Western clawed frog).